The primary structure comprises 520 residues: MTKKLSPLEKQARRPASRACSFCHSKHLQCSNNRPCKNCVKRNIADQCRDVERKRANYMTLAAKNKQGSPNTVSLESSSSPFSPLHKGHINSQSSQPLDPSSGRVNTDFFSQSETTVPSPWPMDLESKERTNAILNTTDDVLNKILYDEQASKVPSAQASEMTPSNSSIDGVFNSNYLNQEYLMLGDIILNSKPASPTPSSTSEYQTIPPNEMMGTVDYNEVYRDTKSKKLKESRPFISLGFSNPPDLDNRKLPGEINIANEIMDPSKRAQVTTTNDYVSPLVTRHIYQSVQDIYANKIINYEYPTSYHALTFFLKKRFSGTSLPPEQKQQKRNNLLIILKLIASYRPTFISAHKSLLKPYDLMFLEMTFQRSLIDYEKLSHLNSSPTIIWRRTGEIVSISDEILSLLGYSLNSILSKRTFIMELMYDDESIINYFKLFKSVAVGNLHSSIITRCKLMKNPDRDRSTRASTTGTEQQLTEADYIEFCAVWTVKRDLFDLPMLIMGQFLPVLPAGDGVRRY.

The zn(2)-C6 fungal-type DNA-binding region spans 20 to 48 (CSFCHSKHLQCSNNRPCKNCVKRNIADQC). Disordered stretches follow at residues 63–104 (AKNK…SSGR) and 194–213 (PASP…PNEM). The segment covering 74–85 (SLESSSSPFSPL) has biased composition (low complexity). The segment covering 90-104 (INSQSSQPLDPSSGR) has biased composition (polar residues). The region spanning 376 to 445 (DYEKLSHLNS…FKLFKSVAVG (70 aa)) is the PAS domain.

Belongs to the ERT1/acuK family.

Its subcellular location is the nucleus. Transcription factor which regulates nonfermentable carbon utilization. This chain is Glucose starvation modulator protein 1 (GSM1), found in Meyerozyma guilliermondii (strain ATCC 6260 / CBS 566 / DSM 6381 / JCM 1539 / NBRC 10279 / NRRL Y-324) (Yeast).